The primary structure comprises 386 residues: Methionine import ATP-binding protein MetN 2 (386 aa).

In terms of domain architecture, ABC transporter spans 32-272 (VIFDDVGKVF…PQHDATRALL (241 aa)). An ATP-binding site is contributed by 69 to 76 (GRSGAGKS).

The protein belongs to the ABC transporter superfamily. Methionine importer (TC 3.A.1.24) family. As to quaternary structure, the complex is composed of two ATP-binding proteins (MetN), two transmembrane proteins (MetI) and a solute-binding protein (MetQ).

Its subcellular location is the cell inner membrane. The catalysed reaction is L-methionine(out) + ATP + H2O = L-methionine(in) + ADP + phosphate + H(+). It carries out the reaction D-methionine(out) + ATP + H2O = D-methionine(in) + ADP + phosphate + H(+). Functionally, part of the ABC transporter complex MetNIQ involved in methionine import. Responsible for energy coupling to the transport system. The sequence is that of Methionine import ATP-binding protein MetN 2 from Paraburkholderia xenovorans (strain LB400).